The chain runs to 148 residues: Small ribosomal subunit protein bS6 (148 aa).

Positions 96–148 (HEEGQSAMLTRRDDRRERDGDDRPRRREGGFDRGDRGDRGPRRPRDNEAGEGA) are disordered.

It belongs to the bacterial ribosomal protein bS6 family.

In terms of biological role, binds together with bS18 to 16S ribosomal RNA. This is Small ribosomal subunit protein bS6 from Brucella abortus biovar 1 (strain 9-941).